The chain runs to 381 residues: Probable glucuronosyltransferase Os04g0103100 (381 aa).

At 1–69 (MASIRRPHSP…HTSFRRPLPR (69 aa)) the chain is on the cytoplasmic side. Residues 21–50 (HLGPFASSSPPSSPLRHSSSSSSPRSAAHH) are disordered. Low complexity predominate over residues 26–46 (ASSSPPSSPLRHSSSSSSPRS). A helical; Signal-anchor for type II membrane protein membrane pass occupies residues 70-90 (FAAFFLLGSFLGLLHFLSHLP). Over 91 to 381 (RPLGPIPNPN…TDLDVIIPLK (291 aa)) the chain is Lumenal. Residues 96–122 (IPNPNSHHRHRDPFPILQHPHPPSTPH) form a disordered region. N-linked (GlcNAc...) asparagine glycans are attached at residues N194 and N296.

This sequence belongs to the glycosyltransferase 43 family.

Its subcellular location is the golgi apparatus membrane. Involved in the synthesis of glucuronoxylan hemicellulose in secondary cell walls. This Oryza sativa subsp. japonica (Rice) protein is Probable glucuronosyltransferase Os04g0103100.